The primary structure comprises 749 residues: Protein phosphatase 1E (749 aa).

Positions 21-128 are disordered; that stretch reads EFRGPCGGGE…PPLPPLPRPL (108 aa). 3 repeat units span residues 31–32, 33–34, and 35–36. The 7 X 2 AA tandem repeats of P-E stretch occupies residues 31–44; sequence PEPEPESEPEPEPE. Over residues 31–45 the composition is skewed to acidic residues; sequence PEPEPESEPEPEPEA. A 4; approximate repeat occupies 37 to 38; that stretch reads SE. Tandem repeats lie at residues 39–40, 41–42, and 43–44. Positions 46-55 are enriched in low complexity; that stretch reads ELVAAEAAEA. Residues 69 to 102 show a composition bias toward acidic residues; that stretch reads ATEEGEQDQDPEPEDEAVEEETATEGEEEEEEEA. Residues 110 to 126 are compositionally biased toward pro residues; the sequence is VPPPPQPQLPPLPPLPR. The region spanning 224-485 is the PPM-type phosphatase domain; that stretch reads QIYYETSIHA…DNITVIVVFL (262 aa). Mn(2+) is bound by residues D270, G271, D432, and D476. A disordered region spans residues 495-537; that stretch reads SEESEWTENSFQGGQEDGGDDKETHGECKRPWPQHQCSAPADL. The span at 515 to 524 shows a compositional bias: basic and acidic residues; it reads DKETHGECKR. A phosphoserine mark is found at S532 and S545. Positions 608 to 627 are disordered; sequence VKSSLPERSGAGEPRVSFNL.

Belongs to the PP2C family. In terms of assembly, heterotrimer. Interacts with PAX1 and ARHGEF6 (or ARHGEF7). Requires Mg(2+) as cofactor. It depends on Mn(2+) as a cofactor.

It localises to the nucleus. The protein resides in the cytoplasm. The catalysed reaction is O-phospho-L-seryl-[protein] + H2O = L-seryl-[protein] + phosphate. It carries out the reaction O-phospho-L-threonyl-[protein] + H2O = L-threonyl-[protein] + phosphate. In terms of biological role, protein phosphatase that inactivates multifunctional CaM kinases such as CAMK4 and CAMK2. Dephosphorylates and inactivates PAK. May play a role in the inhibition of actin fiber stress breakdown and in morphological changes driven by TNK2/CDC42. Dephosphorylates PRKAA2. This is Protein phosphatase 1E (Ppm1e) from Mus musculus (Mouse).